The sequence spans 190 residues: Xanthine phosphoribosyltransferase (190 aa).

L20 and N27 together coordinate xanthine. 129-133 contributes to the 5-phospho-alpha-D-ribose 1-diphosphate binding site; that stretch reads ANGAA. Xanthine is bound at residue K157.

This sequence belongs to the purine/pyrimidine phosphoribosyltransferase family. Xpt subfamily. Homodimer.

The protein localises to the cytoplasm. The catalysed reaction is XMP + diphosphate = xanthine + 5-phospho-alpha-D-ribose 1-diphosphate. It functions in the pathway purine metabolism; XMP biosynthesis via salvage pathway; XMP from xanthine: step 1/1. Converts the preformed base xanthine, a product of nucleic acid breakdown, to xanthosine 5'-monophosphate (XMP), so it can be reused for RNA or DNA synthesis. The chain is Xanthine phosphoribosyltransferase from Laribacter hongkongensis (strain HLHK9).